The following is a 344-amino-acid chain: MGVCGYLFLPWKCLVVVSLRLLFLVPTGVPVRSGDATFPKAMDNVTVRQGESATLRCTIDNRVTRVAWLNRSTILYAGNDKWCLDPRVVLLSNTQTQYSIEIQNVDVYDEGPYTCSVQTDNHPKTSRVHLIVQVSPKIVEISSDISINEGNNISLTCIATGRPEPTVTWRHISPKAVGFVSEDEYLEIQGITREQSGEYECSASNDVAAPVVRRVKVTVNYPPYISEAKGTGVPVGQKGTLQCEASAVPSAEFQWFKDDKRLVEGKKGVKVENRPFLSKLTFFNVSEHDYGNYTCVASNKLGHTNASIMLFGPGAVSEVNNGTSRRAGCIWLLPLLVLHLLLKF.

The first 33 residues, 1-33 (MGVCGYLFLPWKCLVVVSLRLLFLVPTGVPVRS), serve as a signal peptide directing secretion. Ig-like C2-type domains are found at residues 39–126 (PKAM…PKTS), 136–218 (PKIV…VKVT), and 222–309 (PPYI…ASIM). N44, N70, and N152 each carry an N-linked (GlcNAc...) asparagine glycan. A disulfide bond links C57 and C115. 2 disulfides stabilise this stretch: C157/C201 and C243/C295. 3 N-linked (GlcNAc...) asparagine glycosylation sites follow: N284, N292, and N305. N321 is lipidated: GPI-anchor amidated asparagine; alternate. A glycan (N-linked (GlcNAc...) asparagine; alternate) is linked at N321. The propeptide at 322–344 (GTSRRAGCIWLLPLLVLHLLLKF) is removed in mature form.

The protein belongs to the immunoglobulin superfamily. IgLON family.

It is found in the cell membrane. Neural cell adhesion molecule. The sequence is that of Neurotrimin (Ntm) from Mus musculus (Mouse).